Here is a 693-residue protein sequence, read N- to C-terminus: Polyphosphate kinase (693 aa).

ATP is bound at residue asparagine 57. Residues arginine 383 and arginine 413 each contribute to the Mg(2+) site. The active-site Phosphohistidine intermediate is the histidine 443. ATP is bound by residues tyrosine 476, arginine 572, and histidine 601.

Belongs to the polyphosphate kinase 1 (PPK1) family. The cofactor is Mg(2+). An intermediate of this reaction is the autophosphorylated ppk in which a phosphate is covalently linked to a histidine residue through a N-P bond.

The enzyme catalyses [phosphate](n) + ATP = [phosphate](n+1) + ADP. Catalyzes the reversible transfer of the terminal phosphate of ATP to form a long-chain polyphosphate (polyP). In Acinetobacter baumannii (strain ATCC 17978 / DSM 105126 / CIP 53.77 / LMG 1025 / NCDC KC755 / 5377), this protein is Polyphosphate kinase.